We begin with the raw amino-acid sequence, 332 residues long: Cysteine and histidine-rich domain-containing protein 1 (332 aa).

A2 is modified (N-acetylalanine). The interaction with PPP5C stretch occupies residues 2-77; it reads ALLCYNRACG…KPPEPVKPEV (76 aa). Zn(2+)-binding residues include C5, C10, C24, H27, C42, and C43. CHORD domains follow at residues 5–64 and 157–216; these read CYNR…KGRH and CKNG…KGRH. Phosphothreonine is present on T47. At S51 the chain carries Phosphoserine. Zn(2+) contacts are provided by C59, H64, C157, C162, C176, H179, C194, C195, C211, and H216. The tract at residues 62–82 is disordered; it reads GRHNSEKPPEPVKPEVKTTEK. Positions 64–82 are enriched in basic and acidic residues; sequence HNSEKPPEPVKPEVKTTEK. The tract at residues 65–316 is interaction with HSP90AA1 and HSP90AB1; it reads NSEKPPEPVK…AEPMQWASLE (252 aa). One can recognise a CS domain in the interval 227-316; the sequence is VVPCRHDWHQ…AEPMQWASLE (90 aa).

In terms of assembly, interacts with HSP90AA1, HSP90AB1, PPP5C, ROCK1 and ROCK2.

Its function is as follows. Regulates centrosome duplication, probably by inhibiting the kinase activity of ROCK2. Proposed to act as co-chaperone for HSP90. May play a role in the regulation of NOD1 via a HSP90 chaperone complex. In vitro, has intrinsic chaperone activity. This function may be achieved by inhibiting association of ROCK2 with NPM1. Plays a role in ensuring the localization of the tyrosine kinase receptor EGFR to the plasma membrane, and thus ensures the subsequent regulation of EGFR activity and EGF-induced actin cytoskeleton remodeling. Involved in stress response. Prevents tumorigenesis. This is Cysteine and histidine-rich domain-containing protein 1 (CHORDC1) from Macaca fascicularis (Crab-eating macaque).